We begin with the raw amino-acid sequence, 235 residues long: Probable transcriptional regulatory protein Ccon26_04940 (235 aa).

This sequence belongs to the TACO1 family.

The protein resides in the cytoplasm. This chain is Probable transcriptional regulatory protein Ccon26_04940, found in Campylobacter concisus (strain 13826).